The following is a 181-amino-acid chain: MSRIGRRPIALPAKVEIQIDGQHIAVKGPKGQLSRSLPPLITVQQNAQMLTVSRLNDSRPARQLHGLCRTLVANMVDGVSKGFERRLELVGVGYRAAIQGSKLVLNVGYSHPVEIPFPPGIQIAVEGNNIIVVSGTDKELVGNTAARIRAVRPPEPYKGKGIRYLGEQVRRKAGKSGKAKK.

It belongs to the universal ribosomal protein uL6 family. Part of the 50S ribosomal subunit.

Its function is as follows. This protein binds to the 23S rRNA, and is important in its secondary structure. It is located near the subunit interface in the base of the L7/L12 stalk, and near the tRNA binding site of the peptidyltransferase center. This Synechococcus sp. (strain JA-2-3B'a(2-13)) (Cyanobacteria bacterium Yellowstone B-Prime) protein is Large ribosomal subunit protein uL6.